The following is a 412-amino-acid chain: Clamp protein VP6 (412 aa).

Belongs to the reoviridae clamp protein family. As to quaternary structure, interacts with capsid proteins VP3, VP5 and VP7.

It localises to the virion. In terms of biological role, located at the interface of the incomplete T=13 outer capsid and the pseudo T=2 inner capsid, 120 VP6 subunits clamp and stabilizes the inner capsid shell. This Aquareovirus C (isolate Golden shiner/USA/GSRV/1977) (AQRV-C) protein is Clamp protein VP6 (S8).